Here is a 37-residue protein sequence, read N- to C-terminus: Large ribosomal subunit protein bL36 (37 aa).

This sequence belongs to the bacterial ribosomal protein bL36 family.

The sequence is that of Large ribosomal subunit protein bL36 from Desulfotalea psychrophila (strain LSv54 / DSM 12343).